The following is a 189-amino-acid chain: Interferon alpha-7 (189 aa).

A signal peptide spans 1–23; the sequence is MARSFSLLMVVLVLSYKSICSLG. Intrachain disulfides connect Cys24-Cys122 and Cys52-Cys162.

The protein belongs to the alpha/beta interferon family.

It is found in the secreted. Produced by macrophages, IFN-alpha have antiviral activities. Interferon stimulates the production of two enzymes: a protein kinase and an oligoadenylate synthetase. The protein is Interferon alpha-7 (IFNA7) of Homo sapiens (Human).